The following is a 301-amino-acid chain: MAQNVYGPGVRIGNWNEDVYLEEELMKDFLEKRDKGKLLIQRSRRLKQNLLRPMQLSVTEDGYIHYGDKVMLVNPDDPDTEADVFLRGDLSLCMTPDEIQSHLKDELEVPCGLSAVQAKTPIGRNTFIILSVHRDATGQVLRYGQDFCLGITGGFDNKMLYLSSDHRTLLKSSKRSWLQEVYLTDEVSHVNCWQAAFPDPQLRLEYEGFPVPANAKILINHCHTNRGLAAHRHLFLSTYFGKEAEVVAHTYLDSHRVEKPRNHWMLVTGNPRDASSSMLDLPKPPTEDTRAMEQAMGLDTQ.

The disordered stretch occupies residues 269–301; the sequence is GNPRDASSSMLDLPKPPTEDTRAMEQAMGLDTQ.

In terms of assembly, microtubule inner protein component of sperm flagellar doublet microtubules. Expressed in airway epithelial cells.

It localises to the cytoplasm. The protein localises to the cytoskeleton. The protein resides in the cilium axoneme. It is found in the flagellum axoneme. Microtubule inner protein (MIP) part of the dynein-decorated doublet microtubules (DMTs) in cilia axoneme, which is required for motile cilia beating. The chain is Cilia- and flagella-associated protein 161 from Homo sapiens (Human).